The primary structure comprises 455 residues: Bifunctional protein GlmU (455 aa).

The interval 1–227 (MGLSVIILAA…CEEVQGVNDR (227 aa)) is pyrophosphorylase. Residues 8–11 (LAAG), Lys-22, Gln-73, 78–79 (GT), 100–102 (YGD), Gly-137, Glu-152, Asn-167, and Asn-225 each bind UDP-N-acetyl-alpha-D-glucosamine. Asp-102 is a binding site for Mg(2+). Residue Asn-225 coordinates Mg(2+). Residues 228-248 (WELTKLERYYQRLMAKKLSLA) form a linker region. The interval 249 to 455 (GVTIIDPERF…KGWHRPTKKE (207 aa)) is N-acetyltransferase. UDP-N-acetyl-alpha-D-glucosamine-binding residues include Arg-332 and Lys-350. His-362 serves as the catalytic Proton acceptor. Tyr-365 and Asn-376 together coordinate UDP-N-acetyl-alpha-D-glucosamine. Acetyl-CoA-binding positions include Ala-379, 385–386 (NY), Ser-404, Ala-422, and Arg-439.

In the N-terminal section; belongs to the N-acetylglucosamine-1-phosphate uridyltransferase family. This sequence in the C-terminal section; belongs to the transferase hexapeptide repeat family. In terms of assembly, homotrimer. It depends on Mg(2+) as a cofactor.

It localises to the cytoplasm. It carries out the reaction alpha-D-glucosamine 1-phosphate + acetyl-CoA = N-acetyl-alpha-D-glucosamine 1-phosphate + CoA + H(+). The catalysed reaction is N-acetyl-alpha-D-glucosamine 1-phosphate + UTP + H(+) = UDP-N-acetyl-alpha-D-glucosamine + diphosphate. The protein operates within nucleotide-sugar biosynthesis; UDP-N-acetyl-alpha-D-glucosamine biosynthesis; N-acetyl-alpha-D-glucosamine 1-phosphate from alpha-D-glucosamine 6-phosphate (route II): step 2/2. It functions in the pathway nucleotide-sugar biosynthesis; UDP-N-acetyl-alpha-D-glucosamine biosynthesis; UDP-N-acetyl-alpha-D-glucosamine from N-acetyl-alpha-D-glucosamine 1-phosphate: step 1/1. Its pathway is bacterial outer membrane biogenesis; LPS lipid A biosynthesis. In terms of biological role, catalyzes the last two sequential reactions in the de novo biosynthetic pathway for UDP-N-acetylglucosamine (UDP-GlcNAc). The C-terminal domain catalyzes the transfer of acetyl group from acetyl coenzyme A to glucosamine-1-phosphate (GlcN-1-P) to produce N-acetylglucosamine-1-phosphate (GlcNAc-1-P), which is converted into UDP-GlcNAc by the transfer of uridine 5-monophosphate (from uridine 5-triphosphate), a reaction catalyzed by the N-terminal domain. The protein is Bifunctional protein GlmU of Coxiella burnetii (strain RSA 493 / Nine Mile phase I).